The primary structure comprises 344 residues: Dihydroorotase (344 aa).

Positions 14 and 16 each coordinate Zn(2+). Residues 16–18 and asparagine 42 contribute to the substrate site; that span reads HVR. The Zn(2+) site is built by lysine 99, histidine 136, and histidine 174. Residue lysine 99 is modified to N6-carboxylysine. Histidine 136 contributes to the substrate binding site. Leucine 219 is a binding site for substrate. Aspartate 247 provides a ligand contact to Zn(2+). Aspartate 247 is an active-site residue. Positions 251 and 263 each coordinate substrate.

This sequence belongs to the metallo-dependent hydrolases superfamily. DHOase family. Class II DHOase subfamily. Homodimer. It depends on Zn(2+) as a cofactor.

It carries out the reaction (S)-dihydroorotate + H2O = N-carbamoyl-L-aspartate + H(+). The protein operates within pyrimidine metabolism; UMP biosynthesis via de novo pathway; (S)-dihydroorotate from bicarbonate: step 3/3. Catalyzes the reversible cyclization of carbamoyl aspartate to dihydroorotate. This is Dihydroorotase from Leptothrix cholodnii (strain ATCC 51168 / LMG 8142 / SP-6) (Leptothrix discophora (strain SP-6)).